The chain runs to 234 residues: Endonuclease V (234 aa).

Mg(2+) is bound by residues D46 and D116.

The protein belongs to the endonuclease V family. Mg(2+) serves as cofactor.

It is found in the cytoplasm. It catalyses the reaction Endonucleolytic cleavage at apurinic or apyrimidinic sites to products with a 5'-phosphate.. DNA repair enzyme involved in the repair of deaminated bases. Selectively cleaves double-stranded DNA at the second phosphodiester bond 3' to a deoxyinosine leaving behind the intact lesion on the nicked DNA. The polypeptide is Endonuclease V (Clostridium acetobutylicum (strain ATCC 824 / DSM 792 / JCM 1419 / IAM 19013 / LMG 5710 / NBRC 13948 / NRRL B-527 / VKM B-1787 / 2291 / W)).